The sequence spans 736 residues: Gingipain R2 (736 aa).

The first 24 residues, 1–24 (MKKNFSRIVSIVAFSSLLGGMAFA), serve as a signal peptide directing secretion. Residues 25–229 (QPAERGRNPQ…SVFMNYEATR (205 aa)) constitute a propeptide that is removed on maturation. Positions 307, 329, 332, 334, 336, 390, and 395 each coordinate Ca(2+). His440 serves as the catalytic Proton donor. The active-site Nucleophile is the Cys473. Ca(2+) contacts are provided by Phe478, Glu487, Asp521, Glu522, Glu525, His531, Asp613, and Glu639.

The protein belongs to the peptidase C25 family.

It is found in the secreted. It catalyses the reaction Hydrolysis of proteins and small molecule substrates, with a preference for Arg in P1.. Its function is as follows. Thiol protease. Acts synergistically with RgpA to catalyze the maturation of fimbrial subunits, such as FimA. Its proteolytic activity is a major factor in both periodontal tissue destruction and in evasion of host defense mechanisms. In Porphyromonas gingivalis (strain ATCC 33277 / DSM 20709 / CIP 103683 / JCM 12257 / NCTC 11834 / 2561), this protein is Gingipain R2.